The chain runs to 863 residues: MSESHVKISRTIIRGTSPSTVRLESPVRELEDLLDLERDARVRSERNANELSIQLDTMTERLDELSGTSSQTQDAIRRKDMEIANVRKDLENANAAFETAEATLRRKHNTMISEISSEVENLQKQKGRAEKDKSQLMLEIDNVLGQLDGALKAKASAESKLEGLDSQLTRLKALTDDLQRQMADVNSAKSRLAAENFELVRVNQEYEAQVVNFSKTKSVLEGQLDDLKRAMDEDARNRLNLQTQLSSLQMDYDNLQARYEEEAEAAGNLRNQVAKFNADMAALKTRLERELMAKTEEFEELKRKLTVRITELEDIAEHERTRANNLEKTKVKLTIEIKDLQAENEALAAENGELTHRAKQAENLANELQRRVDEMTVEINTLNSANNALEGDNMRLKGQVGDLTDRIANLDRENRQLGDQLKETKSALRDANRRLTDLEALRSQLEADGDNLASALHDAEEALKELEVKYVASQNALNHLKSEMEQRLREKDEELENLRKSTTRTIEELTTTISEMEVRFKSDMSRLKKKYEATISELEVQLDVANKANASLNRENKALAQRVQELQTALEDERRAREAAESNLQVSERKRIALTSEVEEIRSQLELSDRARKNAESELNDANGRISELTMSVNTLTNDKRRLEGDIGVMQGDLDEAVNARKAAEDRADRLNAEVLRLADELRQEQENYKRAETLRKQLEIEIREITVKLEEAEAFATREGRRMVQKLQNRVRELEAELDGEIRRAKEAFASARKYERQFKELQTQSEDDKRMILELQDLLDKTQIKMKAYKRQLEEQEEVSQLTMSKYRKAQQQIEEAEHRADMAERTITIKRTIGGPGSRAVSVVREINSVSRGNRATSIM.

Residues 1–26 (MSESHVKISRTIIRGTSPSTVRLESP) form a nonhelical region region. A coiled-coil region spans residues 27 to 836 (VRELEDLLDL…ERTITIKRTI (810 aa)). The interval 837–863 (GGPGSRAVSVVREINSVSRGNRATSIM) is nonhelical region.

This sequence belongs to the paramyosin family. Homodimer.

The protein resides in the cytoplasm. It is found in the myofibril. Its function is as follows. Paramyosin is a major structural component of many thick filaments isolated from invertebrate muscles. This Echinococcus granulosus (Hydatid tapeworm) protein is Paramyosin.